The following is a 153-amino-acid chain: MSIELDLQIACENENGLPSEKELMTWLNAVIPQFQPQAELTIRIVDEKESHELNHEYRGKDKPTNVLSFPFEAPPGLELNLLGDLIICRQVVEEEAIEQNKPLLAHWAHMVVHGSLHLLGYDHIEDDEAEEMESLETELMQGMGFEDPYIAEK.

Residues H113, H117, and H123 each coordinate Zn(2+).

Belongs to the endoribonuclease YbeY family. The cofactor is Zn(2+).

Its subcellular location is the cytoplasm. Its function is as follows. Single strand-specific metallo-endoribonuclease involved in late-stage 70S ribosome quality control and in maturation of the 3' terminus of the 16S rRNA. This is Endoribonuclease YbeY from Aliivibrio fischeri (strain ATCC 700601 / ES114) (Vibrio fischeri).